We begin with the raw amino-acid sequence, 894 residues long: Probable ion channel SYM8 (894 aa).

The tract at residues 1-124 (MAKSNEEPNS…PPSLPIAITK (124 aa)) is disordered. 3 stretches are compositionally biased toward polar residues: residues 7–16 (EPNSNLNTNK), 24–33 (TLAQQPSLNL), and 44–63 (IGNS…QRNY). A run of 4 helical transmembrane segments spans residues 134–154 (SPIF…SAFL), 204–224 (TISL…YKYI), 267–287 (LALL…LYAV), and 319–339 (IVSV…LGLV). RCK N-terminal domains are found at residues 360–501 (RNHV…ETVV) and 620–769 (PEKI…DKSI). The stretch at 390–415 (VIVVLAEKEKEEMEMDIAKLEFDFMG) forms a coiled coil.

The protein belongs to the castor/pollux (TC 1.A.1.23) family. Homotetramer.

The protein localises to the nucleus membrane. Required for both rhizobial and mycorrhizal symbiosis. Involved in Nod-factor-induced calcium spiking. May induce a change in membrane polarization that activates the opening of a calcium channel required for calcium spiking. Might be calcium gated. The polypeptide is Probable ion channel SYM8 (SYM8) (Pisum sativum (Garden pea)).